The chain runs to 348 residues: tRNA N6-adenosine threonylcarbamoyltransferase (348 aa).

2 residues coordinate Fe cation: His109 and His113. Substrate-binding positions include 136–140 (TVSGG), Asp169, Gly182, Asp186, and Asn284. Fe cation is bound at residue Asp312.

Belongs to the KAE1 / TsaD family. It depends on Fe(2+) as a cofactor.

The protein resides in the cytoplasm. It catalyses the reaction L-threonylcarbamoyladenylate + adenosine(37) in tRNA = N(6)-L-threonylcarbamoyladenosine(37) in tRNA + AMP + H(+). Required for the formation of a threonylcarbamoyl group on adenosine at position 37 (t(6)A37) in tRNAs that read codons beginning with adenine. Is involved in the transfer of the threonylcarbamoyl moiety of threonylcarbamoyl-AMP (TC-AMP) to the N6 group of A37, together with TsaE and TsaB. TsaD likely plays a direct catalytic role in this reaction. The sequence is that of tRNA N6-adenosine threonylcarbamoyltransferase from Chlorobium luteolum (strain DSM 273 / BCRC 81028 / 2530) (Pelodictyon luteolum).